Reading from the N-terminus, the 236-residue chain is Phosphoribosylformylglycinamidine synthase subunit PurQ (236 aa).

The Glutamine amidotransferase type-1 domain maps to Phe-3 to Leu-234. Cys-86 functions as the Nucleophile in the catalytic mechanism. Active-site residues include His-203 and Glu-205.

In terms of assembly, part of the FGAM synthase complex composed of 1 PurL, 1 PurQ and 2 PurS subunits.

It localises to the cytoplasm. It catalyses the reaction N(2)-formyl-N(1)-(5-phospho-beta-D-ribosyl)glycinamide + L-glutamine + ATP + H2O = 2-formamido-N(1)-(5-O-phospho-beta-D-ribosyl)acetamidine + L-glutamate + ADP + phosphate + H(+). It carries out the reaction L-glutamine + H2O = L-glutamate + NH4(+). Its pathway is purine metabolism; IMP biosynthesis via de novo pathway; 5-amino-1-(5-phospho-D-ribosyl)imidazole from N(2)-formyl-N(1)-(5-phospho-D-ribosyl)glycinamide: step 1/2. Functionally, part of the phosphoribosylformylglycinamidine synthase complex involved in the purines biosynthetic pathway. Catalyzes the ATP-dependent conversion of formylglycinamide ribonucleotide (FGAR) and glutamine to yield formylglycinamidine ribonucleotide (FGAM) and glutamate. The FGAM synthase complex is composed of three subunits. PurQ produces an ammonia molecule by converting glutamine to glutamate. PurL transfers the ammonia molecule to FGAR to form FGAM in an ATP-dependent manner. PurS interacts with PurQ and PurL and is thought to assist in the transfer of the ammonia molecule from PurQ to PurL. This Moorella thermoacetica (strain ATCC 39073 / JCM 9320) protein is Phosphoribosylformylglycinamidine synthase subunit PurQ.